The following is a 525-amino-acid chain: Adenosine deaminase AGSA (525 aa).

An N-terminal signal peptide occupies residues methionine 1–alanine 25. N-linked (GlcNAc...) asparagine glycosylation occurs at asparagine 81. Positions 117 and 119 each coordinate Zn(2+). Aspartate 120 is a binding site for substrate. N-linked (GlcNAc...) asparagine glycosylation is present at asparagine 132. Cysteine 142 and cysteine 163 are joined by a disulfide. An N-linked (GlcNAc...) asparagine glycan is attached at asparagine 188. Residues tryptophan 207–phenylalanine 214 and glycine 329 each bind substrate. Asparagine 334 carries N-linked (GlcNAc...) asparagine glycosylation. Histidine 361 provides a ligand contact to Zn(2+). Glutamate 364 acts as the Proton donor in catalysis. The active-site Proton acceptor is the histidine 389. Residue aspartate 446 participates in Zn(2+) binding. Position 447 (aspartate 447) interacts with substrate.

This sequence belongs to the metallo-dependent hydrolases superfamily. Adenosine and AMP deaminases family. ADGF subfamily. The cofactor is Zn(2+). In terms of tissue distribution, detected in egg cordons and in the developing central nervous system. Not detected in adult central nervous system (at protein level). Atrial gland.

The protein localises to the secreted. The catalysed reaction is adenosine + H2O + H(+) = inosine + NH4(+). In terms of biological role, adenosine deaminase that may contribute to the degradation of extracellular adenosine, a signaling molecule that controls a variety of cellular responses. May play a role in the regulation of cell proliferation. This chain is Adenosine deaminase AGSA, found in Aplysia californica (California sea hare).